The primary structure comprises 239 residues: Octanoyltransferase (239 aa).

Positions 48 to 236 constitute a BPL/LPL catalytic domain; the sequence is DGGDELVWLV…AFEAVFGETT (189 aa). Substrate contacts are provided by residues 87–94, 167–169, and 180–182; these read RGGEYTYH, ALG, and GLS. Cysteine 198 acts as the Acyl-thioester intermediate in catalysis.

It belongs to the LipB family.

It is found in the cytoplasm. It catalyses the reaction octanoyl-[ACP] + L-lysyl-[protein] = N(6)-octanoyl-L-lysyl-[protein] + holo-[ACP] + H(+). The protein operates within protein modification; protein lipoylation via endogenous pathway; protein N(6)-(lipoyl)lysine from octanoyl-[acyl-carrier-protein]: step 1/2. Functionally, catalyzes the transfer of endogenously produced octanoic acid from octanoyl-acyl-carrier-protein onto the lipoyl domains of lipoate-dependent enzymes. Lipoyl-ACP can also act as a substrate although octanoyl-ACP is likely to be the physiological substrate. This Rhizobium johnstonii (strain DSM 114642 / LMG 32736 / 3841) (Rhizobium leguminosarum bv. viciae) protein is Octanoyltransferase.